Here is a 641-residue protein sequence, read N- to C-terminus: Leucine-rich repeat protein soc-2 homolog (641 aa).

Over residues 1–19 (MNLCSSGATASTTSLSSTG) the composition is skewed to low complexity. Residues 1–146 (MNLCSSGATA…TTKKSKPIQA (146 aa)) form a disordered region. Over residues 24-56 (SGGGGVAGGGGISNGGGGGGGVTGSGGGGGGNT) the composition is skewed to gly residues. Residues 96 to 106 (GAQQPSGSNGQ) are compositionally biased toward low complexity. LRR repeat units follow at residues 161-182 (GIKRLDLSKSSITVIPSTVKDC), 184-205 (QITELYLYSNKIGQLPPEIGCL), 207-228 (NLRNLALNENSLTSLPESLQNC), 230-251 (QLKVLDLRHNKLAEIPPVIYRL), 253-274 (SLTTLYLRFNRITAVADDLRQL), 276-297 (NLTMLSLRENKIRELGSAIGAL), 299-320 (NLTTLDVSHNHLEHLPEDIGNC), 322-343 (NLSALDLQHNELLDIPDSIGNL), 345-367 (SLVRLGMRYNRLTSVPATLKNCK), 368-389 (CMDEFNVEGNGITQLPDGMLAS), 392-413 (GLTTITLSRNQFTSYPTGGPAQ), 416-437 (NVYSINLEHNRIDKIPYGIFSR), 440-461 (GLTKLNMKENMLTALPLDIGTW), 463-484 (NMVELNLATNALQKLPDDIMNL), 486-507 (NLEILILSNNMLKKIPNTIGNL), 509-530 (RLRILDLEENRIETLPHEIGLL), 532-553 (ELQRLILQTNQITMLPRSIGHL), 555-576 (NLTHLSVSENNLQFLPEEIGSL), 578-600 (SLENLYINQNPGLEKLPFELALC), and 602-623 (NLKYLNIDKCPLSTIPPEIQAG).

It belongs to the SHOC2 family.

Functionally, acts as a Ras effector and participates in MAPK pathway activation. Probably acts as a regulatory subunit of protein phosphatase that specifically dephosphorylates Raf kinase and stimulate Raf activity at specialized signaling complexes upon Ras activation. This Drosophila ananassae (Fruit fly) protein is Leucine-rich repeat protein soc-2 homolog (Sur-8).